The primary structure comprises 43 residues: Protein PsbN (43 aa).

The chain crosses the membrane as a helical span at residues 5–27 (TLVTISISCLLVSFTGYAIYTSF).

The protein belongs to the PsbN family.

It is found in the plastid. The protein localises to the chloroplast thylakoid membrane. In terms of biological role, may play a role in photosystem I and II biogenesis. The polypeptide is Protein PsbN (Welwitschia mirabilis (Tree tumbo)).